A 274-amino-acid polypeptide reads, in one-letter code: Bis(5'-nucleosyl)-tetraphosphatase, symmetrical (274 aa).

Belongs to the Ap4A hydrolase family.

It catalyses the reaction P(1),P(4)-bis(5'-adenosyl) tetraphosphate + H2O = 2 ADP + 2 H(+). Its function is as follows. Hydrolyzes diadenosine 5',5'''-P1,P4-tetraphosphate to yield ADP. The chain is Bis(5'-nucleosyl)-tetraphosphatase, symmetrical from Shewanella sp. (strain W3-18-1).